We begin with the raw amino-acid sequence, 155 residues long: Interleukin-2 (155 aa).

The N-terminal stretch at 1–20 is a signal peptide; that stretch reads MYKMQLVACIALSLVLITNS. A glycan (O-linked (GalNAc...) threonine) is linked at Thr-23. A disulfide bridge links Cys-77 with Cys-125.

Belongs to the IL-2 family.

It localises to the secreted. Its function is as follows. Cytokine produced by activated CD4-positive helper T-cells and to a lesser extend activated CD8-positive T-cells and natural killer (NK) cells that plays pivotal roles in the immune response and tolerance. Binds to a receptor complex composed of either the high-affinity trimeric IL-2R (IL2RA/CD25, IL2RB/CD122 and IL2RG/CD132) or the low-affinity dimeric IL-2R (IL2RB and IL2RG). Interaction with the receptor leads to oligomerization and conformation changes in the IL-2R subunits resulting in downstream signaling starting with phosphorylation of JAK1 and JAK3. In turn, JAK1 and JAK3 phosphorylate the receptor to form a docking site leading to the phosphorylation of several substrates including STAT5. This process leads to activation of several pathways including STAT, phosphoinositide-3-kinase/PI3K and mitogen-activated protein kinase/MAPK pathways. Functions as a T-cell growth factor and can increase NK-cell cytolytic activity as well. Promotes strong proliferation of activated B-cells and subsequently immunoglobulin production. Plays a pivotal role in regulating the adaptive immune system by controlling the survival and proliferation of regulatory T-cells, which are required for the maintenance of immune tolerance. Moreover, participates in the differentiation and homeostasis of effector T-cell subsets, including Th1, Th2, Th17 as well as memory CD8-positive T-cells. The protein is Interleukin-2 (IL2) of Dasypus novemcinctus (Nine-banded armadillo).